A 92-amino-acid chain; its full sequence is Large ribosomal subunit protein bL27 (92 aa).

Residues 1-22 (MAHTKAGGSTRNGRDSRGQRLG) form a disordered region.

Belongs to the bacterial ribosomal protein bL27 family.

This chain is Large ribosomal subunit protein bL27, found in Mycoplasmopsis agalactiae (strain NCTC 10123 / CIP 59.7 / PG2) (Mycoplasma agalactiae).